Consider the following 698-residue polypeptide: Effector protein AvrPphDPgy (698 aa).

Residues 1-15 (MNPLRSIQHNITTPP) are compositionally biased toward polar residues. Disordered stretches follow at residues 1-36 (MNPL…HPKR) and 171-200 (VDSS…DSDS). A compositionally biased stretch (low complexity) spans 172–181 (DSSSPLLSSP).

The protein resides in the secreted. Its function is as follows. Effector protein involved in non-host recognition. The sequence is that of Effector protein AvrPphDPgy (avrPphDPgy) from Pseudomonas savastanoi pv. glycinea (Pseudomonas syringae pv. glycinea).